Reading from the N-terminus, the 353-residue chain is Uroporphyrinogen decarboxylase (353 aa).

Substrate contacts are provided by residues 29 to 33, D79, Y156, T211, and H329; that span reads RQAGR.

It belongs to the uroporphyrinogen decarboxylase family. Homodimer.

The protein localises to the cytoplasm. The enzyme catalyses uroporphyrinogen III + 4 H(+) = coproporphyrinogen III + 4 CO2. It participates in porphyrin-containing compound metabolism; protoporphyrin-IX biosynthesis; coproporphyrinogen-III from 5-aminolevulinate: step 4/4. Its function is as follows. Catalyzes the decarboxylation of four acetate groups of uroporphyrinogen-III to yield coproporphyrinogen-III. This Alcanivorax borkumensis (strain ATCC 700651 / DSM 11573 / NCIMB 13689 / SK2) protein is Uroporphyrinogen decarboxylase.